The chain runs to 167 residues: uncharacterized protein (167 aa).

It is found in the plastid. Its subcellular location is the chloroplast. This is an uncharacterized protein from Mesostigma viride (Green alga).